Reading from the N-terminus, the 162-residue chain is Protein hcp1 (162 aa).

This sequence belongs to the hcp1 family. As to quaternary structure, hexamer. Three hcp1 monomers form two closely related hexameric rings with a 40 Angstrom internal diameter.

The protein resides in the secreted. In terms of biological role, required for assembly of the protein secretion apparatus HSI-I. Actively secreted during chronic infection of cystic fibrosis patients. This is Protein hcp1 (hcp1) from Pseudomonas aeruginosa (strain ATCC 15692 / DSM 22644 / CIP 104116 / JCM 14847 / LMG 12228 / 1C / PRS 101 / PAO1).